A 512-amino-acid polypeptide reads, in one-letter code: Glutamyl-tRNA(Gln) amidotransferase subunit A (512 aa).

Catalysis depends on charge relay system residues Lys82 and Ser157. Ser181 acts as the Acyl-ester intermediate in catalysis.

The protein belongs to the amidase family. GatA subfamily. As to quaternary structure, heterotrimer of A, B and C subunits.

It catalyses the reaction L-glutamyl-tRNA(Gln) + L-glutamine + ATP + H2O = L-glutaminyl-tRNA(Gln) + L-glutamate + ADP + phosphate + H(+). Allows the formation of correctly charged Gln-tRNA(Gln) through the transamidation of misacylated Glu-tRNA(Gln) in organisms which lack glutaminyl-tRNA synthetase. The reaction takes place in the presence of glutamine and ATP through an activated gamma-phospho-Glu-tRNA(Gln). The polypeptide is Glutamyl-tRNA(Gln) amidotransferase subunit A (Bordetella petrii (strain ATCC BAA-461 / DSM 12804 / CCUG 43448)).